We begin with the raw amino-acid sequence, 278 residues long: MPFITVGQENSTSIDLYYEDHGAGQPVVLIHGFPLSGHSWERQSAALLDAGYRVITYDRRGFGQSSQPTTGYDYDTFAADLNTVLETLDLQDAVLVGFSMGTGEVARYVSSYGTARIAKVAFLASLEPFLLKTDDNPDGAAPKEFFDGIVAAVKADRYAFYTGFFNDFYNLDENLGTRISEEAVRNSWNTAASGGFFAAAAAPTTWYTDFRADIPRIDVPALILHGTGDRTLPIENTARVFHKALPSAEYVEVEGAPHGLLWTHAEEVNTALLAFLAK.

Positions P26 to H264 constitute an AB hydrolase-1 domain. Residues S99, D229, and H258 contribute to the active site.

This sequence belongs to the AB hydrolase superfamily. Bacterial non-heme haloperoxidase / perhydrolase family. As to quaternary structure, homodimer.

The polypeptide is Non-heme chloroperoxidase (cpo) (Kitasatospora aureofaciens (Streptomyces aureofaciens)).